Reading from the N-terminus, the 85-residue chain is Antitoxin VapB31 (85 aa).

Antitoxin component of a type II toxin-antitoxin (TA) system. Upon expression in M.smegmatis neutralizes the effect of cognate toxin VapC31. In Mycobacterium tuberculosis (strain ATCC 25618 / H37Rv), this protein is Antitoxin VapB31 (vapB31).